The chain runs to 361 residues: Porphobilinogen deaminase (361 aa).

Position 265 is an S-(dipyrrolylmethanemethyl)cysteine (Cys265). A disordered region spans residues 341–361 (LPPSSNTPTPQPITPITTNNS).

The protein belongs to the HMBS family. Dipyrromethane serves as cofactor.

The catalysed reaction is 4 porphobilinogen + H2O = hydroxymethylbilane + 4 NH4(+). It functions in the pathway porphyrin-containing compound metabolism; protoporphyrin-IX biosynthesis; coproporphyrinogen-III from 5-aminolevulinate: step 2/4. Its function is as follows. Tetrapolymerization of the monopyrrole PBG into the hydroxymethylbilane pre-uroporphyrinogen in several discrete steps. This Debaryomyces hansenii (strain ATCC 36239 / CBS 767 / BCRC 21394 / JCM 1990 / NBRC 0083 / IGC 2968) (Yeast) protein is Porphobilinogen deaminase (HEM3).